The primary structure comprises 227 residues: Thymidine kinase (227 aa).

ATP is bound by residues 15–22 (GSMFSGKT) and 87–90 (DEAQ). Residue glutamate 88 is the Proton acceptor of the active site. Residues cysteine 144, cysteine 147, cysteine 176, and cysteine 179 each coordinate Zn(2+). The tract at residues 198-227 (RAVATDDADASTNEADPEAADAASADGTAA) is disordered. Positions 217 to 227 (ADAASADGTAA) are enriched in low complexity.

Belongs to the thymidine kinase family. As to quaternary structure, homotetramer.

The protein resides in the cytoplasm. The enzyme catalyses thymidine + ATP = dTMP + ADP + H(+). The chain is Thymidine kinase from Salinibacter ruber (strain DSM 13855 / M31).